Reading from the N-terminus, the 267-residue chain is Putative transcription factor Ovo-like 1 (267 aa).

4 C2H2-type zinc fingers span residues 118–140 (FTCHICQKSFTHQRMLNRHMKCH), 146–168 (HLCTYCGKGFNDTFDLKRHVRTH), 174–197 (YKCSLCDKAFTQRCSLESHLKKIH), and 213–236 (YVCEECGCTSESQEGHVLHLKERH).

In terms of tissue distribution, expressed in skin, testis, kidney and weakly in lung. Not detected in heart, brain, spleen, liver and skeletal muscle.

It is found in the nucleus. Its function is as follows. Putative transcription factor. Involved in hair formation and spermatogenesis. May function in the differentiation and/or maintenance of the urogenital system. The polypeptide is Putative transcription factor Ovo-like 1 (Ovol1) (Mus musculus (Mouse)).